Reading from the N-terminus, the 245-residue chain is Small ribosomal subunit protein uS2 (245 aa).

Residues Gly226–Ala245 form a disordered region.

Belongs to the universal ribosomal protein uS2 family.

In Erythrobacter litoralis (strain HTCC2594), this protein is Small ribosomal subunit protein uS2.